Reading from the N-terminus, the 158-residue chain is Putative pre-16S rRNA nuclease (158 aa).

This sequence belongs to the YqgF nuclease family.

The protein localises to the cytoplasm. Its function is as follows. Could be a nuclease involved in processing of the 5'-end of pre-16S rRNA. This Paracoccus denitrificans (strain Pd 1222) protein is Putative pre-16S rRNA nuclease.